A 58-amino-acid polypeptide reads, in one-letter code: SPbeta prophage-derived uncharacterized protein YotN (58 aa).

In Bacillus subtilis (strain 168), this protein is SPbeta prophage-derived uncharacterized protein YotN (yotN).